Consider the following 140-residue polypeptide: uncharacterized protein (140 aa).

The region spanning 2–140 (KAVIAKNEEQ…GIPHLQMMKD (139 aa)) is the N-acetyltransferase domain.

This sequence belongs to the acetyltransferase family.

This is an uncharacterized protein from Bacillus subtilis (strain 168).